A 505-amino-acid polypeptide reads, in one-letter code: 4-alpha-glucanotransferase (505 aa).

It belongs to the disproportionating enzyme family.

It is found in the cytoplasm. It catalyses the reaction Transfers a segment of a (1-&gt;4)-alpha-D-glucan to a new position in an acceptor, which may be glucose or a (1-&gt;4)-alpha-D-glucan.. This Streptococcus pneumoniae serotype 4 (strain ATCC BAA-334 / TIGR4) protein is 4-alpha-glucanotransferase (malQ).